A 367-amino-acid chain; its full sequence is Alanine racemase (367 aa).

Lysine 35 functions as the Proton acceptor; specific for D-alanine in the catalytic mechanism. Lysine 35 carries the post-translational modification N6-(pyridoxal phosphate)lysine. Arginine 130 contacts substrate. The Proton acceptor; specific for L-alanine role is filled by tyrosine 258. Substrate is bound at residue methionine 306.

It belongs to the alanine racemase family. It depends on pyridoxal 5'-phosphate as a cofactor.

It catalyses the reaction L-alanine = D-alanine. It functions in the pathway amino-acid biosynthesis; D-alanine biosynthesis; D-alanine from L-alanine: step 1/1. Catalyzes the interconversion of L-alanine and D-alanine. May also act on other amino acids. The protein is Alanine racemase (alr) of Acinetobacter baumannii (strain SDF).